Consider the following 356-residue polypeptide: DNA polymerase IV (356 aa).

The UmuC domain occupies 6-187 (IIHIDMDYFF…LDIGDFPGVG (182 aa)). Residues D10 and D105 each coordinate Mg(2+). E106 is a catalytic residue.

The protein belongs to the DNA polymerase type-Y family. Monomer. Mg(2+) serves as cofactor.

It localises to the cytoplasm. The enzyme catalyses DNA(n) + a 2'-deoxyribonucleoside 5'-triphosphate = DNA(n+1) + diphosphate. In terms of biological role, poorly processive, error-prone DNA polymerase involved in untargeted mutagenesis. Copies undamaged DNA at stalled replication forks, which arise in vivo from mismatched or misaligned primer ends. These misaligned primers can be extended by PolIV. Exhibits no 3'-5' exonuclease (proofreading) activity. May be involved in translesional synthesis, in conjunction with the beta clamp from PolIII. The polypeptide is DNA polymerase IV (Staphylococcus epidermidis (strain ATCC 35984 / DSM 28319 / BCRC 17069 / CCUG 31568 / BM 3577 / RP62A)).